Consider the following 484-residue polypeptide: Ribonuclease Y (484 aa).

The chain crosses the membrane as a helical span at residues 18–38 (FFAFLFLIIIAFNLCLFAYLY). In terms of domain architecture, KH spans 166–234 (SPSFLISESD…LTVRNILMND (69 aa)). In terms of domain architecture, HD spans 293-385 (VLSHSLETAF…TQIADKLSAA (93 aa)).

The protein belongs to the RNase Y family.

The protein localises to the cell membrane. In terms of biological role, endoribonuclease that initiates mRNA decay. The protein is Ribonuclease Y of Mycoplasma genitalium (strain ATCC 33530 / DSM 19775 / NCTC 10195 / G37) (Mycoplasmoides genitalium).